The sequence spans 371 residues: Cytochrome b (371 aa).

4 consecutive transmembrane segments (helical) span residues 24-44 (FGSM…FLAL), 68-89 (WTMQ…YIHI), 104-124 (WLSG…GYVL), and 169-189 (FFAL…VHIV). Residues His-74 and His-88 each coordinate heme b. Heme b is bound by residues His-173 and His-187. His-192 contributes to the a ubiquinone binding site. 4 helical membrane-spanning segments follow: residues 217–237 (YKDT…MSFA), 279–299 (LGGT…PFTH), 311–331 (LSQL…WTAT), and 338–357 (FITI…MTNP).

The protein belongs to the cytochrome b family. In terms of assembly, the cytochrome bc1 complex contains 3 respiratory subunits (MT-CYB, CYC1 and UQCRFS1), 2 core proteins (UQCRC1 and UQCRC2) and probably 6 low-molecular weight proteins. Requires heme b as cofactor.

The protein localises to the mitochondrion inner membrane. Component of the ubiquinol-cytochrome c reductase complex (complex III or cytochrome b-c1 complex) that is part of the mitochondrial respiratory chain. The b-c1 complex mediates electron transfer from ubiquinol to cytochrome c. Contributes to the generation of a proton gradient across the mitochondrial membrane that is then used for ATP synthesis. The sequence is that of Cytochrome b (MT-CYB) from Homoroselaps lacteus (Spotted harlequin snake).